The following is a 383-amino-acid chain: S-adenosylmethionine synthase (383 aa).

H15 provides a ligand contact to ATP. D17 is a binding site for Mg(2+). E43 is a K(+) binding site. Positions 56 and 99 each coordinate L-methionine. Residues 99–109 are flexible loop; that stretch reads QSPDINQGVDR. Residues 164-166, 230-231, D239, 245-246, A262, and K266 contribute to the ATP site; these read DAK, RF, and RK. D239 is a binding site for L-methionine. K270 is an L-methionine binding site.

Belongs to the AdoMet synthase family. In terms of assembly, homotetramer; dimer of dimers. Mg(2+) is required as a cofactor. Requires K(+) as cofactor.

The protein resides in the cytoplasm. It carries out the reaction L-methionine + ATP + H2O = S-adenosyl-L-methionine + phosphate + diphosphate. The protein operates within amino-acid biosynthesis; S-adenosyl-L-methionine biosynthesis; S-adenosyl-L-methionine from L-methionine: step 1/1. Catalyzes the formation of S-adenosylmethionine (AdoMet) from methionine and ATP. The overall synthetic reaction is composed of two sequential steps, AdoMet formation and the subsequent tripolyphosphate hydrolysis which occurs prior to release of AdoMet from the enzyme. The protein is S-adenosylmethionine synthase of Shewanella baltica (strain OS155 / ATCC BAA-1091).